The chain runs to 333 residues: 2-oxoglutarate-dependent dioxygenase ucsF (333 aa).

Residues 174-296 (NASELRLNHY…RYSIAYLCKA (123 aa)) form the Fe2OG dioxygenase domain. 3 residues coordinate Fe cation: histidine 202, aspartate 204, and histidine 264. 2-oxoglutarate is bound at residue arginine 287.

Belongs to the iron/ascorbate-dependent oxidoreductase family. Fe(2+) is required as a cofactor.

Its pathway is mycotoxin biosynthesis. Functionally, 2-oxoglutarate-dependent dioxygenase; part of the gene cluster that mediates the biosynthesis of UCS1025A, a member of the pyrrolizidinone family that acts as a strong telomerase inhibitor and displays potent antibacterial and antitumor properties. These compounds share a hemiaminal-containing pyrrolizidinone core fused with a gamma-lactone, giving a furopyrrolizidine that is connected to a decalin fragment. The polyketide synthase module (PKS) of the PKS-NRPS ucsA is responsible for the synthesis of the polyketide backbone via the condensation of an acetyl-CoA starter unit with 6 malonyl-CoA units. The downstream nonribosomal peptide synthetase (NRPS) module then amidates the carboxyl end of the polyketide with a 2S,3S-methylproline derived from L-isoleucine by the 2-oxoglutarate-dependent dioxygenase ucsF which converts L-isoleucine to (4S,5S)-4-methylpyrroline-5-carboxylate that is further converted to 2S,3S-methylproline by the pyrroline-5-carboxylate reductase ucsG. Reductive release of the completed aminoacyl polyketide from the assembly line can form the 3-pyrrolin-2-one structure via an intramolecular Knoevenagel reaction. Because ucsA lacks a designated enoylreductase (ER) domain, the required activity is provided the enoyl reductase ucsL. This keto acyclic precursor is the substrate of the Diels-Alderase ucsH, that catalyzes the Diels-Alder cycloaddition. Oxidation of the 3S-methyl group to a carboxylate by the cytochrome P450 monooxygenase ucsK allows an oxa-Michael cyclization that might involve the reductase/dehydrogenase ucsI and which furnishes the furopyrrolizidine. The oxidase ucsJ likely plays a critical role in stereoselective reduction of the C5-C6 double bond to afford the required R-configured carboxylate group. Further enolization and oxidation at C5 by an unidentified enzyme affords the last intermediate that can undergo oxa-Michael cyclization to yield UCS1025A. The polypeptide is 2-oxoglutarate-dependent dioxygenase ucsF (Acremonium sp).